A 485-amino-acid chain; its full sequence is Aldehyde dehydrogenase family 3 member A2 (485 aa).

The Cytoplasmic portion of the chain corresponds to 1–463 (MEREVQRVRQ…FLLRRFNKEK (463 aa)). Residue 185–190 (GNTAVG) coordinates NAD(+). Residues E207 and C241 contribute to the active site. S293 is subject to Phosphoserine. The chain crosses the membrane as a helical span at residues 464–484 (LGLLVLTFLGIVAAVLVNAGY). A Prevents secretion from ER motif is present at residues 481–484 (NAGY).

Belongs to the aldehyde dehydrogenase family. In terms of assembly, homodimer.

Its subcellular location is the microsome membrane. The protein resides in the endoplasmic reticulum membrane. The enzyme catalyses an aldehyde + NAD(+) + H2O = a carboxylate + NADH + 2 H(+). It catalyses the reaction a fatty aldehyde + NAD(+) + H2O = a fatty acid + NADH + 2 H(+). The catalysed reaction is (2E)-hexadecenal + NAD(+) + H2O = (E)-hexadec-2-enoate + NADH + 2 H(+). It carries out the reaction hexadecanoate + NADH + 2 H(+) = hexadecanal + NAD(+) + H2O. The enzyme catalyses 22-oxodocosanoate + NAD(+) + H2O = docosanedioate + NADH + 2 H(+). It catalyses the reaction 2,6,10,14-tetramethylpentadecanal + NAD(+) + H2O = 2,6,10,14-tetramethylpentadecanoate + NADH + 2 H(+). The catalysed reaction is octadecanal + NAD(+) + H2O = octadecanoate + NADH + 2 H(+). It carries out the reaction dodecanoate + NADH + 2 H(+) = dodecanal + NAD(+) + H2O. The enzyme catalyses decanal + NAD(+) + H2O = decanoate + NADH + 2 H(+). It catalyses the reaction tetradecanal + NAD(+) + H2O = tetradecanoate + NADH + 2 H(+). The catalysed reaction is octanal + NAD(+) + H2O = octanoate + NADH + 2 H(+). It carries out the reaction heptanal + NAD(+) + H2O = heptanoate + NADH + 2 H(+). The enzyme catalyses (2E,6E)-farnesal + NAD(+) + H2O = (2E,6E)-farnesoate + NADH + 2 H(+). In terms of biological role, catalyzes the oxidation of medium and long-chain aliphatic aldehydes to fatty acids. Active on a variety of saturated and unsaturated aliphatic aldehydes between 6 and 24 carbons in length. Responsible for conversion of the sphingosine 1-phosphate (S1P) degradation product hexadecenal to hexadecenoic acid. This is Aldehyde dehydrogenase family 3 member A2 (ALDH3A2) from Macaca fascicularis (Crab-eating macaque).